Consider the following 2144-residue polypeptide: Cadherin EGF LAG seven-pass G-type receptor 2 (2144 aa).

Cadherin domains follow at residues 1 to 40, 41 to 146, 147 to 248, and 253 to 371; these read EDQVSYTLAITARDNGIPQKSDTTYLEILVNDVNDNAPQF, LRDS…PPVF, EQDE…PPVL, and ILFN…SPLL. Topologically, residues 1–1605 are extracellular; it reads EDQVSYTLAI…GEILPLKTLT (1605 aa). N-linked (GlcNAc...) asparagine glycans are attached at residues asparagine 261, asparagine 301, asparagine 407, and asparagine 437. In terms of domain architecture, EGF-like 1; calcium-binding spans 453–511; sequence DDNICLREPCENYMRCVSVLRFDSSAPFIASSSVLFRPIHPVGGLRCRCPPGFTGDYCE. Cystine bridges form between cysteine 457–cysteine 468, cysteine 462–cysteine 499, cysteine 501–cysteine 510, cysteine 517–cysteine 528, cysteine 522–cysteine 537, cysteine 539–cysteine 548, cysteine 557–cysteine 568, cysteine 562–cysteine 578, and cysteine 580–cysteine 590. The 37-residue stretch at 513-549 folds into the EGF-like 2; calcium-binding domain; sequence EVDLCYSRPCGPHGHCRSREGGYTCLCRDGYTGEHCE. One can recognise an EGF-like 3; calcium-binding domain in the interval 553-591; that stretch reads RSGRCTPGVCKNGGTCVNLLVGGFKCDCPSGDFEKPFCQ. A Laminin G-like 1 domain is found at 592–796; sequence VTTRSFPARS…IANNGTVPGC (205 aa). Residues asparagine 726 and asparagine 790 are each glycosylated (N-linked (GlcNAc...) asparagine). 4 disulfides stabilise this stretch: cysteine 770–cysteine 796, cysteine 803–cysteine 814, cysteine 808–cysteine 823, and cysteine 825–cysteine 834. The region spanning 799 to 835 is the EGF-like 4; calcium-binding domain; it reads KKNVCDSNTCHNGGTCVNQWDAFSCECPLGFGGKSCA. Asparagine 816 carries the (3R)-3-hydroxyasparagine modification. The region spanning 839 to 1016 is the Laminin G-like 2 domain; that stretch reads ANPQRFLGSS…GESINVEPGC (178 aa). An N-linked (GlcNAc...) asparagine glycan is attached at asparagine 966. 14 disulfides stabilise this stretch: cysteine 986-cysteine 1016, cysteine 1022-cysteine 1033, cysteine 1027-cysteine 1042, cysteine 1044-cysteine 1053, cysteine 1057-cysteine 1068, cysteine 1062-cysteine 1080, cysteine 1082-cysteine 1091, cysteine 1112-cysteine 1124, cysteine 1114-cysteine 1131, cysteine 1133-cysteine 1146, cysteine 1149-cysteine 1161, cysteine 1151-cysteine 1168, cysteine 1170-cysteine 1179, and cysteine 1182-cysteine 1194. In terms of domain architecture, EGF-like 5; calcium-binding spans 1018 to 1053; the sequence is WPDPCDSNPCPTNSYCSNDWDSYSCSCDPGYYGDNC. Position 1035 is a (3R)-3-hydroxyasparagine (asparagine 1035). An N-linked (GlcNAc...) asparagine glycan is attached at asparagine 1052. Positions 1054–1092 constitute an EGF-like 6; calcium-binding domain; the sequence is TNVCDLNPCEHQSACTRKPSAPHGYICECLPNYLGPYCE. One can recognise an EGF-like 7; calcium-binding domain in the interval 1108–1147; it reads TCGPCNCDVSKGFDPDCNKTSGECHCKENHYRPPSSPTCL. Asparagine 1125 carries an N-linked (GlcNAc...) asparagine glycan. The Laminin EGF-like domain maps to 1149–1196; the sequence is CDCYPTGSLSRVCDPEDGQCPCKPGVIGRQCDRCDNPFAEVTTNGCEV. Asparagine 1249, asparagine 1268, and asparagine 1286 each carry an N-linked (GlcNAc...) asparagine glycan. In terms of domain architecture, GAIN-B spans 1424–1594; it reads ETTVILPESV…AVLMDVSRRE (171 aa). The disordered stretch occupies residues 1439-1466; sequence PMVRSAGPGEAQETEELARRQRRHPELS. Disulfide bonds link cysteine 1544–cysteine 1576 and cysteine 1564–cysteine 1578. Positions 1544-1594 are GPS; the sequence is CVFWNHSILVSGTGGWSARGCEVVFRNESHVSCQCNHMTSFAVLMDVSRRE. Residues asparagine 1548 and asparagine 1570 are each glycosylated (N-linked (GlcNAc...) asparagine). Residues 1606 to 1626 traverse the membrane as a helical segment; it reads YVALGVTLAALMITFLFLTLL. Residues 1627 to 1641 lie on the Cytoplasmic side of the membrane; the sequence is RALRSNQHGIRRNLT. The helical transmembrane segment at 1642-1662 threads the bilayer; that stretch reads AALGLAQLVFLLGINQADLPF. Position 1663 (alanine 1663) is a topological domain, extracellular. The helical transmembrane segment at 1664–1684 threads the bilayer; sequence CTVIAILLHFLYLCTFSWALL. Residues 1685–1705 are Cytoplasmic-facing; it reads EALHLYRALTEVRDVNASPMR. Residues 1706 to 1726 traverse the membrane as a helical segment; that stretch reads FYYMLGWGVPAFITGLAVGLD. The Extracellular portion of the chain corresponds to 1727 to 1744; sequence PEGYGNPDFCWLSIYDTL. The chain crosses the membrane as a helical span at residues 1745–1765; the sequence is IWSFAGPVAFAVSMSVFLYIL. The Cytoplasmic segment spans residues 1766–1789; that stretch reads SARASCAAQRQGFEKKGPVSGLRS. A helical transmembrane segment spans residues 1790–1810; the sequence is SFTVLLLLSATWLLALLSVNS. The Extracellular segment spans residues 1811 to 1816; sequence DTLLFH. A helical transmembrane segment spans residues 1817-1837; the sequence is YLFAACNCVQGPFIFLSYVVL. Residues 1838–2144 are Cytoplasmic-facing; that stretch reads SKEVRKALKF…SEFLFFNFLH (307 aa). The disordered stretch occupies residues 1914–2109; the sequence is TLNPGQVPPG…PPRPPPRQSL (196 aa). Over residues 1943–1955 the composition is skewed to acidic residues; sequence TDSDSDLSLEDDQ. Over residues 2016-2025 the composition is skewed to polar residues; it reads GTTTKENSGS. The span at 2028-2040 shows a compositional bias: basic and acidic residues; it reads LEERPRENGDALT. A compositionally biased stretch (polar residues) spans 2082–2095; that stretch reads GTGSSRGSTASEGS.

The protein belongs to the G-protein coupled receptor 2 family. LN-TM7 subfamily. In terms of assembly, heterodimer of 2 chains generated by proteolytic processing; the large extracellular N-terminal fragment and the membrane-bound C-terminal fragment predominantly remain associated and non-covalently linked. In terms of processing, the iron and 2-oxoglutarate dependent 3-hydroxylation of aspartate and asparagine is (R) stereospecific within EGF domains. Autoproteolytically processed at the GPS region of the GAIN-B domain; this cleavage modulates receptor activity. In terms of tissue distribution, expressed in the brain. High expression in cerebellum and olfactory bulb. Weaker expression in cerebral cortex, hippocampus and brain stem.

The protein resides in the cell membrane. Its function is as follows. Receptor that may have an important role in cell/cell signaling during nervous system formation. In Rattus norvegicus (Rat), this protein is Cadherin EGF LAG seven-pass G-type receptor 2.